Here is a 160-residue protein sequence, read N- to C-terminus: Negative modulator of initiation of replication (160 aa).

Belongs to the SeqA family. Homodimer. Polymerizes to form helical filaments.

The protein resides in the cytoplasm. Functionally, negative regulator of replication initiation, which contributes to regulation of DNA replication and ensures that replication initiation occurs exactly once per chromosome per cell cycle. Binds to pairs of hemimethylated GATC sequences in the oriC region, thus preventing assembly of replication proteins and re-initiation at newly replicated origins. Repression is relieved when the region becomes fully methylated. The sequence is that of Negative modulator of initiation of replication from Idiomarina loihiensis (strain ATCC BAA-735 / DSM 15497 / L2-TR).